Reading from the N-terminus, the 682-residue chain is DNA-directed RNA polymerase subunit beta' (682 aa).

Zn(2+)-binding residues include Cys-69, Cys-71, Cys-87, and Cys-90. Positions 489, 491, and 493 each coordinate Mg(2+).

This sequence belongs to the RNA polymerase beta' chain family. RpoC1 subfamily. As to quaternary structure, in plastids the minimal PEP RNA polymerase catalytic core is composed of four subunits: alpha, beta, beta', and beta''. When a (nuclear-encoded) sigma factor is associated with the core the holoenzyme is formed, which can initiate transcription. The cofactor is Mg(2+). Requires Zn(2+) as cofactor.

The protein resides in the plastid. It is found in the chloroplast. The catalysed reaction is RNA(n) + a ribonucleoside 5'-triphosphate = RNA(n+1) + diphosphate. In terms of biological role, DNA-dependent RNA polymerase catalyzes the transcription of DNA into RNA using the four ribonucleoside triphosphates as substrates. In Acorus calamus var. americanus (American sweet flag), this protein is DNA-directed RNA polymerase subunit beta'.